A 188-amino-acid chain; its full sequence is Probable nicotinate-nucleotide adenylyltransferase (188 aa).

The protein belongs to the NadD family.

The enzyme catalyses nicotinate beta-D-ribonucleotide + ATP + H(+) = deamido-NAD(+) + diphosphate. It participates in cofactor biosynthesis; NAD(+) biosynthesis; deamido-NAD(+) from nicotinate D-ribonucleotide: step 1/1. In terms of biological role, catalyzes the reversible adenylation of nicotinate mononucleotide (NaMN) to nicotinic acid adenine dinucleotide (NaAD). The polypeptide is Probable nicotinate-nucleotide adenylyltransferase (Rhizobium meliloti (strain 1021) (Ensifer meliloti)).